The chain runs to 539 residues: Glucose-6-phosphate isomerase (539 aa).

The active-site Proton donor is Glu-353. Residues His-384 and Lys-505 contribute to the active site.

The protein belongs to the GPI family.

The protein localises to the cytoplasm. It catalyses the reaction alpha-D-glucose 6-phosphate = beta-D-fructose 6-phosphate. It participates in carbohydrate biosynthesis; gluconeogenesis. Its pathway is carbohydrate degradation; glycolysis; D-glyceraldehyde 3-phosphate and glycerone phosphate from D-glucose: step 2/4. Its function is as follows. Catalyzes the reversible isomerization of glucose-6-phosphate to fructose-6-phosphate. This is Glucose-6-phosphate isomerase from Ralstonia pickettii (strain 12J).